Here is a 512-residue protein sequence, read N- to C-terminus: Protein maph-9 (512 aa).

Disordered stretches follow at residues I24–F103, D168–K386, and G481–R512. Low complexity-rich tracts occupy residues T30–G39 and S78–A95. Residues T178–K200 are compositionally biased toward basic and acidic residues. Over residues P230–K239 the composition is skewed to polar residues. Basic and acidic residues-rich tracts occupy residues K260 to S302 and V310 to K386. Residues K267–R429 adopt a coiled-coil conformation. Over residues P502–R512 the composition is skewed to polar residues.

As to expression, expressed in amphid and phasmid ciliated neurons.

Its subcellular location is the cell projection. It localises to the cilium. It is found in the cytoplasm. The protein localises to the cytoskeleton. The protein resides in the cilium axoneme. This chain is Protein maph-9, found in Caenorhabditis elegans.